A 100-amino-acid polypeptide reads, in one-letter code: Integration host factor subunit alpha (100 aa).

The disordered stretch occupies residues 53–72 (FDLRDKRQRPGRNPKTGEEI).

It belongs to the bacterial histone-like protein family. As to quaternary structure, heterodimer of an alpha and a beta chain.

Functionally, this protein is one of the two subunits of integration host factor, a specific DNA-binding protein that functions in genetic recombination as well as in transcriptional and translational control. This Pseudomonas entomophila (strain L48) protein is Integration host factor subunit alpha.